The chain runs to 300 residues: Phosphatidylglycerol--prolipoprotein diacylglyceryl transferase (300 aa).

7 helical membrane passes run 17 to 37 (LAIRWYGLMYLAAFIMFLWFG), 59 to 79 (MLFYGVLGVILGGRLGYVLFY), 94 to 114 (VWEGGMAFHGGFLGVVVAMML), 129 to 149 (FIAPMVPCGLAAGRLGNFING), 204 to 224 (SQIYQFLGEGVLFFILLWLYA), 230 to 250 (MGAVSGAFLLGYGVFRFAAEF), and 265 to 285 (LSMGQWLSLPMILIGIAMLVW). A 1,2-diacyl-sn-glycero-3-phospho-(1'-sn-glycerol) is bound at residue Arg-142.

It belongs to the Lgt family.

It localises to the cell inner membrane. It catalyses the reaction L-cysteinyl-[prolipoprotein] + a 1,2-diacyl-sn-glycero-3-phospho-(1'-sn-glycerol) = an S-1,2-diacyl-sn-glyceryl-L-cysteinyl-[prolipoprotein] + sn-glycerol 1-phosphate + H(+). Its pathway is protein modification; lipoprotein biosynthesis (diacylglyceryl transfer). Catalyzes the transfer of the diacylglyceryl group from phosphatidylglycerol to the sulfhydryl group of the N-terminal cysteine of a prolipoprotein, the first step in the formation of mature lipoproteins. The protein is Phosphatidylglycerol--prolipoprotein diacylglyceryl transferase of Ralstonia pickettii (strain 12J).